The primary structure comprises 675 residues: MYLLPLLFPLLNLFISCILGKFLGKRVLFVLVINMLFSAIFSFWIFYEVGINKSVCYIDLGPWFHIGLLKLNWLFLFDSITSVMLVLVVFVSLLVHLYSIDYMSGDPHIIRFLGYLSLFTFFMLMLVTSGNFVQLFLGWEGVGLSSYLLINFWYTRIQANKSAMKAIIVNRFGDFGIYFSLLVIFFFFKSFDFGVVFNLVQFLDTQPRMSFLGFSLNRVDLIVIFLFLGAIGKSAQLGLHTWLPDAMEGPTPVSALIHAATMVTAGVFVLIRSSPILEYSSTGLFLVSLIGGLTALFAGTVGLVQYDIKKVIAYSTCSQLGYMFFACGMSNYSVGLFHLFNHGFFKALLFLGAGSVIHALLDEQDMRKMGGLIKLMPLTYVAILVGSLSLTGFPFLTGFYSKEVVLEIAFSKFSINSFFIYWLGVFAAFITSFYSIRLMYLVFFARPNSHARAVNSSHESSSFIFYVLAFLGFLSIFIGFIFKDLFIGLGTDFWANSIFNLYVNSDILYAEFLDYYYKLIPLVFSIVGLFFSLFVYFVIYDYTVFVVKNKFFRYAYFFLAKKWYFDLLYNNIFVFNLLSSFYLLTFKIIDRGLIELFGPLSFVRLINKSSIIFSSFQTGFLYNYIFVVLLGLMFFIKLTSSLFFPSFNSFFNFGLFICLLSLIIFLSFGNKKQNI.

A run of 19 helical transmembrane segments spans residues 3-23, 27-47, 75-95, 108-127, 132-154, 177-197, 211-231, 251-271, 284-304, 311-329, 334-354, 380-400, 413-433, 462-482, 519-539, 564-584, 593-613, 624-644, and 649-669; these read LLPLLFPLLNLFISCILGKFL, VLFVLVINMLFSAIFSFWIFY, FLFDSITSVMLVLVVFVSLLV, HIIRFLGYLSLFTFFMLMLV, FVQLFLGWEGVGLSSYLLINFWY, IYFSLLVIFFFFKSFDFGVVF, FLGFSLNRVDLIVIFLFLGAI, TPVSALIHAATMVTAGVFVLI, LFLVSLIGGLTALFAGTVGLV, VIAYSTCSQLGYMFFACGM, VGLFHLFNHGFFKALLFLGAG, YVAILVGSLSLTGFPFLTGFY, FSINSFFIYWLGVFAAFITSF, SFIFYVLAFLGFLSIFIGFIF, LIPLVFSIVGLFFSLFVYFVI, YFDLLYNNIFVFNLLSSFYLL, LIELFGPLSFVRLINKSSIIF, YIFVVLLGLMFFIKLTSSLFF, and SFFNFGLFICLLSLIIFLSFG.

Belongs to the complex I subunit 5 family.

The protein localises to the mitochondrion inner membrane. It catalyses the reaction a ubiquinone + NADH + 5 H(+)(in) = a ubiquinol + NAD(+) + 4 H(+)(out). Core subunit of the mitochondrial membrane respiratory chain NADH dehydrogenase (Complex I) that is believed to belong to the minimal assembly required for catalysis. Complex I functions in the transfer of electrons from NADH to the respiratory chain. The immediate electron acceptor for the enzyme is believed to be ubiquinone. This Acanthamoeba castellanii (Amoeba) protein is NADH-ubiquinone oxidoreductase chain 5 (ND5).